The chain runs to 298 residues: N-acetylmuramic acid 6-phosphate etherase (298 aa).

The SIS domain maps to 55–218 (AANRYKKGGR…STGVMIRQGK (164 aa)). Residue glutamate 83 is the Proton donor of the active site. Glutamate 114 is a catalytic residue.

The protein belongs to the GCKR-like family. MurNAc-6-P etherase subfamily. Homodimer.

It catalyses the reaction N-acetyl-D-muramate 6-phosphate + H2O = N-acetyl-D-glucosamine 6-phosphate + (R)-lactate. It participates in amino-sugar metabolism; N-acetylmuramate degradation. In terms of biological role, specifically catalyzes the cleavage of the D-lactyl ether substituent of MurNAc 6-phosphate, producing GlcNAc 6-phosphate and D-lactate. The sequence is that of N-acetylmuramic acid 6-phosphate etherase from Lactobacillus acidophilus (strain ATCC 700396 / NCK56 / N2 / NCFM).